The chain runs to 739 residues: AN1-type zinc finger protein 4 (739 aa).

In terms of domain architecture, Ubiquitin-like spans 54–129 (MELFIETLTG…LKLVLAMRGG (76 aa)). Over residues 246–255 (KPKKVVKVKP) the composition is skewed to basic residues. 2 disordered regions span residues 246 to 270 (KPKK…STAA) and 287 to 316 (LPSG…RPVS). Residues 673–720 (KKIMKHCFLCGKKTGLATSFECRCGNNFCASHRYAEAHGCTYDYKSAG) form an AN1-type zinc finger. The Zn(2+) site is built by C679, C682, C694, C696, C701, H704, H710, and C712.

This Mus musculus (Mouse) protein is AN1-type zinc finger protein 4 (Zfand4).